Reading from the N-terminus, the 155-residue chain is 6,7-dimethyl-8-ribityllumazine synthase (155 aa).

Residues tryptophan 23, 57 to 59, and 81 to 83 each bind 5-amino-6-(D-ribitylamino)uracil; these read AWE and CVI. 86-87 is a (2S)-2-hydroxy-3-oxobutyl phosphate binding site; sequence DT. Histidine 89 (proton donor) is an active-site residue. Residue asparagine 114 coordinates 5-amino-6-(D-ribitylamino)uracil. Arginine 128 provides a ligand contact to (2S)-2-hydroxy-3-oxobutyl phosphate.

The protein belongs to the DMRL synthase family. As to quaternary structure, forms an icosahedral capsid composed of 60 subunits, arranged as a dodecamer of pentamers.

It catalyses the reaction (2S)-2-hydroxy-3-oxobutyl phosphate + 5-amino-6-(D-ribitylamino)uracil = 6,7-dimethyl-8-(1-D-ribityl)lumazine + phosphate + 2 H2O + H(+). Its pathway is cofactor biosynthesis; riboflavin biosynthesis; riboflavin from 2-hydroxy-3-oxobutyl phosphate and 5-amino-6-(D-ribitylamino)uracil: step 1/2. Functionally, catalyzes the formation of 6,7-dimethyl-8-ribityllumazine by condensation of 5-amino-6-(D-ribitylamino)uracil with 3,4-dihydroxy-2-butanone 4-phosphate. This is the penultimate step in the biosynthesis of riboflavin. This is 6,7-dimethyl-8-ribityllumazine synthase from Stenotrophomonas maltophilia (strain K279a).